The following is a 465-amino-acid chain: Light-independent protochlorophyllide reductase subunit N (465 aa).

Residues Cys23, Cys48, and Cys108 each coordinate [4Fe-4S] cluster.

This sequence belongs to the BchN/ChlN family. As to quaternary structure, protochlorophyllide reductase is composed of three subunits; ChlL, ChlN and ChlB. Forms a heterotetramer of two ChlB and two ChlN subunits. It depends on [4Fe-4S] cluster as a cofactor.

It carries out the reaction chlorophyllide a + oxidized 2[4Fe-4S]-[ferredoxin] + 2 ADP + 2 phosphate = protochlorophyllide a + reduced 2[4Fe-4S]-[ferredoxin] + 2 ATP + 2 H2O. The protein operates within porphyrin-containing compound metabolism; chlorophyll biosynthesis (light-independent). Its function is as follows. Component of the dark-operative protochlorophyllide reductase (DPOR) that uses Mg-ATP and reduced ferredoxin to reduce ring D of protochlorophyllide (Pchlide) to form chlorophyllide a (Chlide). This reaction is light-independent. The NB-protein (ChlN-ChlB) is the catalytic component of the complex. This Trichodesmium erythraeum (strain IMS101) protein is Light-independent protochlorophyllide reductase subunit N.